The chain runs to 514 residues: Probable transposase for insertion sequence element IS1353 (514 aa).

Residues 172 to 216 (KGDTSLEQRHEALLRELAELESQNQRLRMENAILEKASELIKKDM) are a coiled coil. An Integrase catalytic domain is found at 346–510 (HASAPNTKWL…SPIEYRHAVG (165 aa)). Asp357 and Asp417 together coordinate Mg(2+).

This sequence belongs to the transposase 8 family.

Functionally, probably involved in the transposition of insertion sequence IS1353. The chain is Probable transposase for insertion sequence element IS1353 from Shigella flexneri.